Here is a 328-residue protein sequence, read N- to C-terminus: Methionyl-tRNA formyltransferase (328 aa).

121–124 (SLLP) contacts (6S)-5,6,7,8-tetrahydrofolate.

The protein belongs to the Fmt family.

The enzyme catalyses L-methionyl-tRNA(fMet) + (6R)-10-formyltetrahydrofolate = N-formyl-L-methionyl-tRNA(fMet) + (6S)-5,6,7,8-tetrahydrofolate + H(+). Attaches a formyl group to the free amino group of methionyl-tRNA(fMet). The formyl group appears to play a dual role in the initiator identity of N-formylmethionyl-tRNA by promoting its recognition by IF2 and preventing the misappropriation of this tRNA by the elongation apparatus. In Paraburkholderia xenovorans (strain LB400), this protein is Methionyl-tRNA formyltransferase.